We begin with the raw amino-acid sequence, 342 residues long: Forkhead box protein D5-C (342 aa).

Residues Met1–Gly89 are disordered. Positions Ser20 to Pro34 are enriched in acidic residues. The span at Ser59 to Ser70 shows a compositional bias: polar residues. Over residues Ser71–Leu83 the composition is skewed to basic and acidic residues. Residues Lys97 to Lys191 constitute a DNA-binding region (fork-head).

At the onset of gastrulation, expressed in the superficial layer of cells in the dorsal blastopore lip (Spemann organizer). In the open neural plate, expressed in a row of cells destined to become the floor plate of the neural tube. After neural tube closure, only detected in the tailtip and a small area located at the midbrain/hindbrain boundary.

It localises to the nucleus. Its function is as follows. Transcriptional repressor. This is Forkhead box protein D5-C (foxd5-c) from Xenopus laevis (African clawed frog).